The following is a 545-amino-acid chain: Chaperonin GroEL 2 (545 aa).

ATP contacts are provided by residues 30-33, K51, 87-91, G415, and D494; these read TLGP and DGTTT. The segment at 526 to 545 is disordered; sequence EKGAGMPGMPPGGGYPGMGM. The span at 536 to 545 shows a compositional bias: gly residues; that stretch reads PGGGYPGMGM.

Belongs to the chaperonin (HSP60) family. As to quaternary structure, forms a cylinder of 14 subunits composed of two heptameric rings stacked back-to-back. Interacts with the co-chaperonin GroES.

It localises to the cytoplasm. It carries out the reaction ATP + H2O + a folded polypeptide = ADP + phosphate + an unfolded polypeptide.. Its function is as follows. Together with its co-chaperonin GroES, plays an essential role in assisting protein folding. The GroEL-GroES system forms a nano-cage that allows encapsulation of the non-native substrate proteins and provides a physical environment optimized to promote and accelerate protein folding. In Syntrophus aciditrophicus (strain SB), this protein is Chaperonin GroEL 2.